Here is a 741-residue protein sequence, read N- to C-terminus: Isocitrate dehydrogenase [NADP] (741 aa).

Asparagine 85 and serine 87 together coordinate NADP(+). Positions 132, 135, 139, 145, and 255 each coordinate D-threo-isocitrate. Asparagine 135 is an NADP(+) binding site. Residue aspartate 350 coordinates Mn(2+). 2 residues coordinate D-threo-isocitrate: tyrosine 420 and arginine 547. Aspartate 548 contacts Mn(2+). The NADP(+) site is built by serine 585, histidine 589, arginine 600, aspartate 602, and arginine 649.

The protein belongs to the monomeric-type IDH family. In terms of assembly, monomer. Mg(2+) is required as a cofactor. Mn(2+) serves as cofactor.

The protein resides in the cytoplasm. It carries out the reaction D-threo-isocitrate + NADP(+) = 2-oxoglutarate + CO2 + NADPH. With respect to regulation, activity is inhibited in the presence of Ca(2+). In terms of biological role, catalyzes the oxidative decarboxylation of isocitrate to 2-oxoglutarate and carbon dioxide with the concomitant reduction of NADP(+). In Azotobacter vinelandii, this protein is Isocitrate dehydrogenase [NADP].